Consider the following 152-residue polypeptide: Deoxyuridine 5'-triphosphate nucleotidohydrolase (152 aa).

Substrate is bound by residues Arg-71–Gly-73, Asn-84, Leu-88–Asp-90, and Met-98.

Belongs to the dUTPase family. It depends on Mg(2+) as a cofactor.

The enzyme catalyses dUTP + H2O = dUMP + diphosphate + H(+). Its pathway is pyrimidine metabolism; dUMP biosynthesis; dUMP from dCTP (dUTP route): step 2/2. Its function is as follows. This enzyme is involved in nucleotide metabolism: it produces dUMP, the immediate precursor of thymidine nucleotides and it decreases the intracellular concentration of dUTP so that uracil cannot be incorporated into DNA. This Shewanella sediminis (strain HAW-EB3) protein is Deoxyuridine 5'-triphosphate nucleotidohydrolase.